The following is a 45-amino-acid chain: Large ribosomal subunit protein bL34c (45 aa).

It belongs to the bacterial ribosomal protein bL34 family.

Its subcellular location is the plastid. It localises to the chloroplast. This Emiliania huxleyi (Coccolithophore) protein is Large ribosomal subunit protein bL34c.